A 172-amino-acid chain; its full sequence is C-phycocyanin beta subunit (172 aa).

The residue at position 72 (Asn72) is an N4-methylasparagine. (2R,3E)-phycocyanobilin is bound by residues Cys82 and Cys153.

Belongs to the phycobiliprotein family. As to quaternary structure, the alpha and beta subunits exhibit high affinity for one another and form heterodimers. These heterodimers form heterohexamers of 3 alpha and 3 beta subunits which, in turn, aggregate into a heterododecamer consisting of 2 heterohexamers. Post-translationally, contains two covalently linked bilin chromophores.

The protein localises to the cellular thylakoid membrane. Its function is as follows. Light-harvesting photosynthetic bile pigment-protein from the phycobiliprotein complex (phycobilisome, PBS). Phycocyanin is the major phycobiliprotein in the PBS rod. The protein is C-phycocyanin beta subunit (cpcB) of Arthrospira platensis (Spirulina platensis).